The chain runs to 453 residues: Chromosomal replication initiator protein DnaA (453 aa).

A domain I, interacts with DnaA modulators region spans residues Met1–Tyr71. The interval Tyr71–Glu114 is domain II. The interval Gln115 to Ser331 is domain III, AAA+ region. ATP contacts are provided by Gly159, Gly161, Lys162, and Thr163. Residues Gln332–Val453 are domain IV, binds dsDNA.

Belongs to the DnaA family. Oligomerizes as a right-handed, spiral filament on DNA at oriC.

The protein resides in the cytoplasm. Plays an essential role in the initiation and regulation of chromosomal replication. ATP-DnaA binds to the origin of replication (oriC) to initiate formation of the DNA replication initiation complex once per cell cycle. Binds the DnaA box (a 9 base pair repeat at the origin) and separates the double-stranded (ds)DNA. Forms a right-handed helical filament on oriC DNA; dsDNA binds to the exterior of the filament while single-stranded (ss)DNA is stabiized in the filament's interior. The ATP-DnaA-oriC complex binds and stabilizes one strand of the AT-rich DNA unwinding element (DUE), permitting loading of DNA polymerase. After initiation quickly degrades to an ADP-DnaA complex that is not apt for DNA replication. Binds acidic phospholipids. The protein is Chromosomal replication initiator protein DnaA of Staphylococcus aureus (strain Mu3 / ATCC 700698).